The following is a 308-amino-acid chain: MSVRGRVAPSQTPSRIPGTVLAYLALTKPRVIELLLVTAIPAMLLAQRGTVNPLLIVNTLIGGMLAAGGANALNCVADADIDKVMKRTARRPLARAAVPTRNALVFGLVLTAGSFLWLWWTTNLLSGLLALATIAFYVFIYTLLLKRRTSQNVVWGGAAGCMPVMIGWSAVTGTIQWPALVMFAIIFFWTPPHTWALAMRYKDDYKAAGVPMLPAVATERQVTKQILVYTWLTVLATLALALATGWLYAAVAVVAGVWFLAMAHQLYAGVRAGEPVKPLRLFLQSNNYLAVVFCALAIDSAIGLPHLF.

The next 8 helical transmembrane spans lie at 31–51 (VIEL…RGTV), 53–73 (PLLI…ANAL), 102–122 (NALV…WWTT), 124–144 (LLSG…YTLL), 149–169 (TSQN…IGWS), 170–190 (AVTG…FFWT), 240–260 (LALA…VWFL), and 288–308 (YLAV…PHLF).

Belongs to the UbiA prenyltransferase family. Protoheme IX farnesyltransferase subfamily.

The protein resides in the cell membrane. The enzyme catalyses heme b + (2E,6E)-farnesyl diphosphate + H2O = Fe(II)-heme o + diphosphate. The protein operates within porphyrin-containing compound metabolism; heme O biosynthesis; heme O from protoheme: step 1/1. Functionally, converts heme B (protoheme IX) to heme O by substitution of the vinyl group on carbon 2 of heme B porphyrin ring with a hydroxyethyl farnesyl side group. This Mycobacterium avium (strain 104) protein is Protoheme IX farnesyltransferase.